Reading from the N-terminus, the 180-residue chain is Large ribosomal subunit protein uL6 (180 aa).

This sequence belongs to the universal ribosomal protein uL6 family. Part of the 50S ribosomal subunit.

In terms of biological role, this protein binds to the 23S rRNA, and is important in its secondary structure. It is located near the subunit interface in the base of the L7/L12 stalk, and near the tRNA binding site of the peptidyltransferase center. This Protochlamydia amoebophila (strain UWE25) protein is Large ribosomal subunit protein uL6.